We begin with the raw amino-acid sequence, 161 residues long: MTDQQTNGAAAEDNSPQFSLQRIYVRDLSFEAPKSPQIFRQTWEPSVALDLNTKQKSLEGDFHEVVLTLSVTVKNGDEVAFIAEVQQAGIFLIANLDAPSMSHTLGAFCPNILFPYAREALDSLVTRGSFPALMLSPVNFDALYAQEMQRMQEAGEAPTVQ.

The protein belongs to the SecB family. Homotetramer, a dimer of dimers. One homotetramer interacts with 1 SecA dimer.

The protein resides in the cytoplasm. One of the proteins required for the normal export of preproteins out of the cell cytoplasm. It is a molecular chaperone that binds to a subset of precursor proteins, maintaining them in a translocation-competent state. It also specifically binds to its receptor SecA. This is Protein-export protein SecB from Pseudomonas putida (strain ATCC 700007 / DSM 6899 / JCM 31910 / BCRC 17059 / LMG 24140 / F1).